The primary structure comprises 378 residues: Queuine tRNA-ribosyltransferase (378 aa).

D93 serves as the catalytic Proton acceptor. Substrate-binding positions include 93-97 (DSGGF), D147, Q189, and G216. The tract at residues 247–253 (GVGTFRE) is RNA binding. D266 serves as the catalytic Nucleophile. Residues 271–275 (TRVAR) are RNA binding; important for wobble base 34 recognition. Residues C308, C310, C313, and H339 each contribute to the Zn(2+) site.

The protein belongs to the queuine tRNA-ribosyltransferase family. As to quaternary structure, homodimer. Within each dimer, one monomer is responsible for RNA recognition and catalysis, while the other monomer binds to the replacement base PreQ1. The cofactor is Zn(2+).

It catalyses the reaction 7-aminomethyl-7-carbaguanine + guanosine(34) in tRNA = 7-aminomethyl-7-carbaguanosine(34) in tRNA + guanine. It participates in tRNA modification; tRNA-queuosine biosynthesis. Catalyzes the base-exchange of a guanine (G) residue with the queuine precursor 7-aminomethyl-7-deazaguanine (PreQ1) at position 34 (anticodon wobble position) in tRNAs with GU(N) anticodons (tRNA-Asp, -Asn, -His and -Tyr). Catalysis occurs through a double-displacement mechanism. The nucleophile active site attacks the C1' of nucleotide 34 to detach the guanine base from the RNA, forming a covalent enzyme-RNA intermediate. The proton acceptor active site deprotonates the incoming PreQ1, allowing a nucleophilic attack on the C1' of the ribose to form the product. After dissociation, two additional enzymatic reactions on the tRNA convert PreQ1 to queuine (Q), resulting in the hypermodified nucleoside queuosine (7-(((4,5-cis-dihydroxy-2-cyclopenten-1-yl)amino)methyl)-7-deazaguanosine). The chain is Queuine tRNA-ribosyltransferase from Gloeobacter violaceus (strain ATCC 29082 / PCC 7421).